Consider the following 220-residue polypeptide: LQFTAALAQRLTAEGAELWLDTTARRLLGGPAGVEGVETSRGIIDADAVVVAAGSYSPALTRRFGLRLPIEPVKGYSVSIPLHGIEGAPGMSIIDDARKVVVTRLGEQLRIAGKAEITGFDLRLDERRWRAVREQGLSRFPRLAEQLADAPSQPWAGLRPMTCDGPPILGPTPISGLHLATGVGHLGWTFAAGSARLVADQLEERTCDLDPAPYSLQRYG.

Belongs to the DadA oxidoreductase family. FAD serves as cofactor.

This is an uncharacterized protein from Halorhodospira halophila (Ectothiorhodospira halophila).